A 320-amino-acid polypeptide reads, in one-letter code: Copper chaperone for superoxide dismutase, chloroplastic/cytosolic (320 aa).

The N-terminal 67 residues, 1–67 (MASILRSVAT…LSRSFVSSPM (67 aa)), are a transit peptide targeting the chloroplast. One can recognise an HMA domain in the interval 86–149 (QLLTEFMVDM…ALEQTGRKAR (64 aa)). Cu cation is bound by residues cysteine 97, cysteine 100, cysteine 300, and cysteine 302.

In the C-terminal section; belongs to the Cu-Zn superoxide dismutase family. In terms of assembly, interacts with CSD1. Cu(2+) serves as cofactor. Expressed in roots, shoots, stems and flowers, and at lower levels in rosette and cauline leaves.

It localises to the plastid. The protein localises to the chloroplast. It is found in the cytoplasm. Its subcellular location is the cytosol. Functionally, copper chaperone for the superoxide dismutases CSD1, CSD2 and CSD3. Binds copper ions and delivers them specifically to CSDs. Is required for assistance in CSDs disulfide bond formation and thereby activation of CSDs. May be involved in the negative regulation of heat stress-responsive genes and thermotolerance. The sequence is that of Copper chaperone for superoxide dismutase, chloroplastic/cytosolic (CCS) from Arabidopsis thaliana (Mouse-ear cress).